A 343-amino-acid chain; its full sequence is Ribosomal RNA small subunit methyltransferase C (343 aa).

This sequence belongs to the methyltransferase superfamily. RsmC family. Monomer.

The protein localises to the cytoplasm. It catalyses the reaction guanosine(1207) in 16S rRNA + S-adenosyl-L-methionine = N(2)-methylguanosine(1207) in 16S rRNA + S-adenosyl-L-homocysteine + H(+). Functionally, specifically methylates the guanine in position 1207 of 16S rRNA in the 30S particle. This is Ribosomal RNA small subunit methyltransferase C from Escherichia coli O8 (strain IAI1).